A 122-amino-acid chain; its full sequence is Guanine nucleotide exchange factor MSS4 homolog (122 aa).

The 112-residue stretch at E9–K120 folds into the MSS4 domain. Zn(2+)-binding residues include C22, C25, C92, and C95.

It belongs to the DSS4/MSS4 family. Interacts with Rab8.

It localises to the basal cell membrane. In terms of biological role, guanine-nucleotide-releasing protein that acts on members of the sec4/ypt1/rab subfamily such as Rab8. During egg development, essential for establishing and maintaining epithelial cell polarity by regulating the correct polarized deposition of basal membrane (BM) proteins such as trol/Pcan and vkg/Coll IV to the basal surface of follicular epithelial (FE) cells. Likely to function by restricting the activity of the vesicle transport regulator Rab8 to the basal membrane, and thus directs BM protein-containing vesicles to the basal side of the FE cells. This function is independent of the Crag/Rab10 regulation of polarized BM protein secretion in the FE. The protein is Guanine nucleotide exchange factor MSS4 homolog of Drosophila melanogaster (Fruit fly).